The chain runs to 427 residues: Phosphatidylinositol 4-phosphate 5-kinase 10 (427 aa).

In terms of domain architecture, PIPK spans 1–419; the sequence is MFTREITAKD…RFQDFVSQIF (419 aa). Disordered stretches follow at residues 247–287 and 334–355; these read SRGS…DSEN and MKIP…VGKQ. The interval 379–400 is activation loop; that stretch reads YGVRKRLEHCYKSIQHSSKTIS.

It carries out the reaction a 1,2-diacyl-sn-glycero-3-phospho-(1D-myo-inositol 4-phosphate) + ATP = a 1,2-diacyl-sn-glycero-3-phospho-(1D-myo-inositol-4,5-bisphosphate) + ADP + H(+). This is Phosphatidylinositol 4-phosphate 5-kinase 10 (PIP5K10) from Arabidopsis thaliana (Mouse-ear cress).